Consider the following 60-residue polypeptide: Large ribosomal subunit protein bL32 (60 aa).

The segment at 1–28 (MAVQQNKKSRSARDMRRSHDALEASTLS) is disordered. Residues 11–22 (SARDMRRSHDAL) are compositionally biased toward basic and acidic residues.

It belongs to the bacterial ribosomal protein bL32 family.

The protein is Large ribosomal subunit protein bL32 of Pseudomonas savastanoi pv. phaseolicola (strain 1448A / Race 6) (Pseudomonas syringae pv. phaseolicola (strain 1448A / Race 6)).